Consider the following 190-residue polypeptide: Transmembrane protein 11, mitochondrial (190 aa).

A run of 2 helical transmembrane segments spans residues 84-100 and 107-124; these read VLAGTACLFTPLALPLD and LPAGVLSLACCTLYGISW.

Belongs to the TMEM11 family. Associates with the mitochondrial contact site and cristae organizing system (MICOS) complex, composed of at least MICOS10/MIC10, CHCHD3/MIC19, CHCHD6/MIC25, APOOL/MIC27, IMMT/MIC60, APOO/MIC23/MIC26 and QIL1/MIC13. This complex was also known under the names MINOS or MitOS complex. The MICOS complex associates with mitochondrial outer membrane proteins SAMM50, MTX1, MTX2 and DNAJC11, mitochondrial inner membrane protein TMEM11 and with HSPA9. Interacts with IMMT/MIC60.

The protein resides in the mitochondrion inner membrane. In terms of biological role, plays a role in mitochondrial morphogenesis. In Mus musculus (Mouse), this protein is Transmembrane protein 11, mitochondrial (Tmem11).